Reading from the N-terminus, the 167-residue chain is Ribosome maturation factor RimM (167 aa).

Positions 94 to 166 constitute a PRC barrel domain; it reads TGRAYLHELI…YMVVPRFDEF (73 aa).

The protein belongs to the RimM family. As to quaternary structure, binds ribosomal protein uS19.

Its subcellular location is the cytoplasm. An accessory protein needed during the final step in the assembly of 30S ribosomal subunit, possibly for assembly of the head region. Essential for efficient processing of 16S rRNA. May be needed both before and after RbfA during the maturation of 16S rRNA. It has affinity for free ribosomal 30S subunits but not for 70S ribosomes. The protein is Ribosome maturation factor RimM of Chlorobium phaeobacteroides (strain DSM 266 / SMG 266 / 2430).